The chain runs to 160 residues: Photosystem II extrinsic protein V (160 aa).

A signal peptide spans 1-25 (MKRFFLVAIASVLFFFNTMVGSANA). Heme c-binding residues include Cys62, Cys65, His66, and His117.

This sequence belongs to the cytochrome c family. PsbV subfamily. As to quaternary structure, PSII is composed of 1 copy each of membrane proteins PsbA, PsbB, PsbC, PsbD, PsbE, PsbF, PsbH, PsbI, PsbJ, PsbK, PsbL, PsbM, PsbT, PsbX, PsbY, PsbZ, Psb30/Ycf12, peripheral proteins PsbO, CyanoQ (PsbQ), PsbU, PsbV and a large number of cofactors. It forms dimeric complexes. The cyanobacterial oxygen-evolving complex is composed of PsbO, CyanoQ (PsbQ), PsbV and PsbU. It depends on heme c as a cofactor.

It is found in the cellular thylakoid membrane. One of the extrinsic, lumenal subunits of photosystem II (PSII). PSII is a light-driven water plastoquinone oxidoreductase, using light energy to abstract electrons from H(2)O, generating a proton gradient subsequently used for ATP formation. The extrinsic proteins stabilize the structure of photosystem II oxygen-evolving complex (OEC), the ion environment of oxygen evolution and protect the OEC against heat-induced inactivation. Low-potential cytochrome c that plays a role in the OEC of PSII, required for normal function or stabilization of PSII. The sequence is that of Photosystem II extrinsic protein V from Synechocystis sp. (strain ATCC 27184 / PCC 6803 / Kazusa).